A 1055-amino-acid chain; its full sequence is cAMP and cAMP-inhibited cGMP 3',5'-cyclic phosphodiesterase 10A (1055 aa).

Disordered stretches follow at residues 1-90 (MASL…RGGG), 151-193 (AAAA…GRRR), and 205-250 (LPAR…RPQG). Gly residues-rich tracts occupy residues 79–90 (GGPGALSARGGG) and 154–168 (AGGGGDAGGGGGGGQ). Low complexity predominate over residues 220–231 (PLGQAARRAGSP). The span at 232 to 243 (GFPGAGPGGGGQ) shows a compositional bias: gly residues. T282 carries the phosphothreonine modification. GAF domains follow at residues 367–510 (DNQL…SVAI) and 542–688 (AIDS…ALAL). 3',5'-cyclic AMP-binding positions include 562 to 563 (RC), 606 to 607 (IA), T640, Q659, and H791. The PDEase domain occupies 718–1035 (TSEEWQGLMQ…SQWEKVIRGE (318 aa)). Residue H791 is the Proton donor of the active site. H791 is a binding site for 3',5'-cyclic GMP. Residues H795, H829, D830, and D940 each coordinate a divalent metal cation. Q992 is a 3',5'-cyclic AMP binding site. Q992 contacts 3',5'-cyclic GMP.

This sequence belongs to the cyclic nucleotide phosphodiesterase family. Homodimer. The cofactor is a divalent metal cation. In terms of processing, phosphorylated on Thr-16. In terms of tissue distribution, abundant in the putamen and caudate nucleus regions of brain and testis, moderately expressed in the thyroid gland, pituitary gland, thalamus and cerebellum.

It is found in the cytoplasm. The protein localises to the cytosol. The catalysed reaction is a nucleoside 3',5'-cyclic phosphate + H2O = a nucleoside 5'-phosphate + H(+). It carries out the reaction 3',5'-cyclic AMP + H2O = AMP + H(+). It catalyses the reaction 3',5'-cyclic GMP + H2O = GMP + H(+). Its pathway is purine metabolism; 3',5'-cyclic AMP degradation; AMP from 3',5'-cyclic AMP: step 1/1. It participates in purine metabolism; 3',5'-cyclic GMP degradation; GMP from 3',5'-cyclic GMP: step 1/1. Its activity is regulated as follows. Inhibited by dipyridamole and moderately by IBMX. cGMP acts as an allosteric activator. Plays a role in signal transduction by regulating the intracellular concentration of cyclic nucleotides. Can hydrolyze both cAMP and cGMP, but has higher affinity for cAMP and is more efficient with cAMP as substrate. May play a critical role in regulating cAMP and cGMP levels in the striatum, a region of the brain that contributes to the control of movement and cognition. In Homo sapiens (Human), this protein is cAMP and cAMP-inhibited cGMP 3',5'-cyclic phosphodiesterase 10A (PDE10A).